The sequence spans 166 residues: uncharacterized protein (166 aa).

Position 117 to 124 (117 to 124 (AAKSGGKT)) interacts with ATP.

This is an uncharacterized protein from Mycoplasma pneumoniae (strain ATCC 29342 / M129 / Subtype 1) (Mycoplasmoides pneumoniae).